Consider the following 197-residue polypeptide: UDP-N-acetylglucosamine transferase subunit alg13 (197 aa).

Residues 174–197 form a disordered region; that stretch reads VRGPDQKNQPTLEQVMSDEMGFVD.

The protein belongs to the glycosyltransferase 28 family. As to quaternary structure, heterodimer with alg14 to form a functional enzyme.

The protein localises to the endoplasmic reticulum. It catalyses the reaction an N-acetyl-alpha-D-glucosaminyl-diphospho-di-trans,poly-cis-dolichol + UDP-N-acetyl-alpha-D-glucosamine = an N,N'-diacetylchitobiosyl-diphospho-di-trans,poly-cis-dolichol + UDP + H(+). Functionally, involved in protein N-glycosylation. Essential for the second step of the dolichol-linked oligosaccharide pathway. The protein is UDP-N-acetylglucosamine transferase subunit alg13 (alg13) of Aspergillus fumigatus (strain ATCC MYA-4609 / CBS 101355 / FGSC A1100 / Af293) (Neosartorya fumigata).